The sequence spans 360 residues: Pyrimidine monooxygenase RutA (360 aa).

Residues 49-50, N115, E124, 140-141, and S190 contribute to the FMN site; these read IK and RY.

This sequence belongs to the NtaA/SnaA/DszA monooxygenase family. RutA subfamily.

It carries out the reaction uracil + FMNH2 + NADH + O2 = (Z)-3-ureidoacrylate + FMN + NAD(+) + H2O + H(+). The catalysed reaction is thymine + FMNH2 + NADH + O2 = (Z)-2-methylureidoacrylate + FMN + NAD(+) + H2O + H(+). Functionally, catalyzes the pyrimidine ring opening between N-3 and C-4 by an unusual flavin hydroperoxide-catalyzed mechanism, adding oxygen atoms in the process to yield ureidoacrylate peracid, that immediately reacts with FMN forming ureidoacrylate and FMN-N(5)-oxide. The FMN-N(5)-oxide reacts spontaneously with NADH to produce FMN. Requires the flavin reductase RutF to regenerate FMN in vivo. The protein is Pyrimidine monooxygenase RutA of Stutzerimonas stutzeri (strain A1501) (Pseudomonas stutzeri).